The sequence spans 638 residues: MPRLLRGVFCVVEIFHKYAIEDGGNQATLTRTELRQLLEGEIGDFLQPHVFHAVERKLNLLNFDRDGTISFEEFVLAIFSLLNPSYFDISLLNSEPRLMSKSEKIDAVDLGAIGGNIQQVVGVGPTQERLIFPSEMASSGQPSNEEGEVGDEPMVSPCEDIKTHSLPRNVSEPNDPENQQPKEDAQEVAQNVPATEYDGVQFKRNTVVEVPKQSTSPTQEIPRERSKPSRRLSDTKISDHMIQRPTEDEEHTSTTQDPFLQKRDKATGSENTDLSVVAATRKSSQTQEIFEPMDDTKLSEAQETGKDAGRIPPETNLEEPKADAKVAESHGLPAQEREHNTRDQSVQSRSRNVSETSSRGEQEGEWKEHERITLSPTADAETQDEKCQEFPGSWRENDAKKDSAAKDPSSEEGNQNLPEIKEDSVSGKEARHSEEDTVYAFEINKNSPAAEETLETRERSQELAPLEKQSQRKKHRATRIQDKPVRKEDHNEGEDSELSLTQSDEGFCEIPNSLAPEVGKSSSEIAEPHVPEDSQSQIDHHGDAKQESHTNNPDPQKQGAPGESSREQEAVVLSIQEDGQLPEGQEQSARDGLHDGLSSRTKGGPGAAVEPSEGEEVQEATAGRENRKALEAESLEAQ.

The region spanning 49-84 is the EF-hand domain; the sequence is HVFHAVERKLNLLNFDRDGTISFEEFVLAIFSLLNP. A disordered region spans residues 134–638; it reads SEMASSGQPS…ALEAESLEAQ (505 aa). The span at 166 to 179 shows a compositional bias: polar residues; that stretch reads LPRNVSEPNDPENQ. 3 stretches are compositionally biased toward basic and acidic residues: residues 221–246, 294–309, and 318–328; these read IPRERSKPSRRLSDTKISDHMIQRPT, DDTKLSEAQETGKDAG, and EEPKADAKVAE. A compositionally biased stretch (polar residues) spans 343–357; that stretch reads DQSVQSRSRNVSETS. Composition is skewed to basic and acidic residues over residues 358–372, 395–409, 419–435, 479–490, 526–548, and 622–631; these read SRGEQEGEWKEHERI, RENDAKKDSAAKDPS, EIKEDSVSGKEARHSEE, RIQDKPVRKEDH, AEPHVPEDSQSQIDHHGDAKQES, and AGRENRKALE.

Belongs to the S-100 family.

This Mus musculus (Mouse) protein is Trichohyalin-like protein 1 (Tchhl1).